The chain runs to 275 residues: Dermonecrotic toxin SpeSicTox-betaIIA2i (275 aa).

His5 is a catalytic residue. Glu25 and Asp27 together coordinate Mg(2+). Catalysis depends on His41, which acts as the Nucleophile. Cystine bridges form between Cys45-Cys51 and Cys47-Cys190. Asp85 provides a ligand contact to Mg(2+).

It belongs to the arthropod phospholipase D family. Class II subfamily. Mg(2+) serves as cofactor. Expressed by the venom gland.

It is found in the secreted. The enzyme catalyses an N-(acyl)-sphingosylphosphocholine = an N-(acyl)-sphingosyl-1,3-cyclic phosphate + choline. The catalysed reaction is an N-(acyl)-sphingosylphosphoethanolamine = an N-(acyl)-sphingosyl-1,3-cyclic phosphate + ethanolamine. It catalyses the reaction a 1-acyl-sn-glycero-3-phosphocholine = a 1-acyl-sn-glycero-2,3-cyclic phosphate + choline. It carries out the reaction a 1-acyl-sn-glycero-3-phosphoethanolamine = a 1-acyl-sn-glycero-2,3-cyclic phosphate + ethanolamine. Its function is as follows. Dermonecrotic toxins cleave the phosphodiester linkage between the phosphate and headgroup of certain phospholipids (sphingolipid and lysolipid substrates), forming an alcohol (often choline) and a cyclic phosphate. This toxin acts on sphingomyelin (SM). It may also act on ceramide phosphoethanolamine (CPE), lysophosphatidylcholine (LPC) and lysophosphatidylethanolamine (LPE), but not on lysophosphatidylserine (LPS), and lysophosphatidylglycerol (LPG). It acts by transphosphatidylation, releasing exclusively cyclic phosphate products as second products. Induces dermonecrosis, hemolysis, increased vascular permeability, edema, inflammatory response, and platelet aggregation. This Sicarius peruensis (Six-eyed sand spider) protein is Dermonecrotic toxin SpeSicTox-betaIIA2i.